The sequence spans 442 residues: Trigger factor (442 aa).

The 86-residue stretch at 163–248 (YDRVTINYCI…IIKIEKKQEL (86 aa)) folds into the PPIase FKBP-type domain.

It belongs to the FKBP-type PPIase family. Tig subfamily.

Its subcellular location is the cytoplasm. The enzyme catalyses [protein]-peptidylproline (omega=180) = [protein]-peptidylproline (omega=0). Involved in protein export. Acts as a chaperone by maintaining the newly synthesized protein in an open conformation. Functions as a peptidyl-prolyl cis-trans isomerase. The sequence is that of Trigger factor from Buchnera aphidicola subsp. Acyrthosiphon pisum (strain Tuc7).